The primary structure comprises 440 residues: UDP-N-acetylmuramoylalanine--D-glutamate ligase (440 aa).

115–121 (GSNGKST) provides a ligand contact to ATP.

Belongs to the MurCDEF family.

The protein resides in the cytoplasm. The catalysed reaction is UDP-N-acetyl-alpha-D-muramoyl-L-alanine + D-glutamate + ATP = UDP-N-acetyl-alpha-D-muramoyl-L-alanyl-D-glutamate + ADP + phosphate + H(+). It participates in cell wall biogenesis; peptidoglycan biosynthesis. Its function is as follows. Cell wall formation. Catalyzes the addition of glutamate to the nucleotide precursor UDP-N-acetylmuramoyl-L-alanine (UMA). This is UDP-N-acetylmuramoylalanine--D-glutamate ligase from Aliivibrio fischeri (strain MJ11) (Vibrio fischeri).